A 78-amino-acid chain; its full sequence is uncharacterized protein (78 aa).

A signal peptide spans 1 to 27; the sequence is MQNSKTDMCAALWAVTGLVLNVAVRFA.

This is an uncharacterized protein from Dryophytes versicolor (chameleon treefrog).